The following is a 281-amino-acid chain: 2-dehydro-3-deoxyphosphooctonate aldolase (281 aa).

The protein belongs to the KdsA family.

The protein localises to the cytoplasm. It catalyses the reaction D-arabinose 5-phosphate + phosphoenolpyruvate + H2O = 3-deoxy-alpha-D-manno-2-octulosonate-8-phosphate + phosphate. The protein operates within carbohydrate biosynthesis; 3-deoxy-D-manno-octulosonate biosynthesis; 3-deoxy-D-manno-octulosonate from D-ribulose 5-phosphate: step 2/3. It functions in the pathway bacterial outer membrane biogenesis; lipopolysaccharide biosynthesis. This Janthinobacterium sp. (strain Marseille) (Minibacterium massiliensis) protein is 2-dehydro-3-deoxyphosphooctonate aldolase.